The following is a 224-amino-acid chain: Homeobox protein Hox-B6 (224 aa).

The Antp-type hexapeptide motif lies at 127–132 (VYPWMQ). Positions 146 to 205 (GRRGRQTYTRYQTLELEKEFHYNRYLTRRRRIEIAHALCLTERQIKIWFQNRRMKWKKES) form a DNA-binding region, homeobox. Ser214 is subject to Phosphoserine.

The protein belongs to the Antp homeobox family.

It localises to the nucleus. Its function is as follows. Sequence-specific transcription factor which is part of a developmental regulatory system that provides cells with specific positional identities on the anterior-posterior axis. This Homo sapiens (Human) protein is Homeobox protein Hox-B6 (HOXB6).